The sequence spans 690 residues: Iron-regulated transcriptional activator AFT1 (690 aa).

The interval 1–21 (MEGFNPADIEHASPINSSDSH) is disordered. Zn(2+) is bound at residue D110. DNA-binding residues include K111, K115, I131, E132, R133, S134, D135, and K138. Zn(2+) is bound at residue C143. Over residues 148–159 (RGRNARRKRKDK) the composition is skewed to basic residues. The segment at 148 to 205 (RGRNARRKRKDKPKGQDHEDEKSKINDDELEYASPSNATVTNGPQTSPDQTSSIKPKK) is disordered. Residues 160–174 (PKGQDHEDEKSKIND) are compositionally biased toward basic and acidic residues. Polar residues predominate over residues 181–201 (SPSNATVTNGPQTSPDQTSSI). Position 215 (C215) interacts with Zn(2+). K226 contributes to the DNA binding site. H239 and H241 together coordinate Zn(2+). N263 is a binding site for DNA. Residues 291 to 293 (CDC) carry the CDC [2Fe-2S] cluster binding motif motif. Disordered regions lie at residues 335–357 (PCLP…PKSQ) and 612–655 (SSNE…VQKD). The span at 339 to 351 (SVNNTGSINTNNV) shows a compositional bias: polar residues. Residues 621–638 (HQYGPQQQPPQQLQYHQN) show a composition bias toward low complexity. Residues 639 to 649 (QPHDGHNHEQH) are compositionally biased toward basic and acidic residues.

Homodimer. Dimerization decreases the DNA-binding activity.

The protein localises to the nucleus. With respect to regulation, dimerization via the binding of Fe(2+) or a [2Fe-2S] cluster decreases the DNA-binding activity. Its function is as follows. Transcription factor that activates the genes for FRE1, FRE2 and FET3 in response to iron deprivationand thereby plays a central role in iron homeostasis. Also required for the expression of LSO1. Recognizes the consensus iron-responsive element (Fe-RE) sequence 5'-CACCC-3' in the promoters of target genes. Iron could interact directly with AFT1 and inhibits its activity. In high iron condition, the presence of Fe(2+) or [2Fe-2S] cluster leads to dimerization, which in turn leads to a decrease in DNA affinity. The protein is Iron-regulated transcriptional activator AFT1 of Saccharomyces cerevisiae (strain ATCC 204508 / S288c) (Baker's yeast).